The primary structure comprises 411 residues: MKMVLSQRQREELNQAIADYLGSNGYADSLETFRKEADLSTEVEKKFGGLLEKKWTSVIRLQKKVMELEAKLTEAEKEVIEGAPTKNKRTPGEWIPRPPEKFSLTGHRASITRVIFHPIFGLMVSASEDATIRIWDFETGEYERSLKGHTDSVQDVAFDAQGKLLASCSADLSIKLWDFQQSYECIKTMHGHDHNVSSVAFVPAGDYVLSASRDRTIKMWEVATGYCVKTYTGHREWVRMVRVHIEGSIFATCSNDQTIRVWLTNSKDCKVELRDHEHTVECIAWAPEAAASAINEAAGADNKKGHHQGPFLASGSRDKTIRIWDVSVGLCLLTLSGHDNWVRGLAFHPGGKYLVSASDDKTIRVWDLRNKRCMKTLYAHQHFCTSIDFHKAHPYVISGSVDQTVKVWECR.

The LisH domain occupies 9-41; the sequence is QREELNQAIADYLGSNGYADSLETFRKEADLST. Residues 56-83 are a coiled coil; the sequence is TSVIRLQKKVMELEAKLTEAEKEVIEGA. WD repeat units lie at residues 106 to 147, 148 to 187, 191 to 230, 233 to 272, 275 to 334, 337 to 376, and 379 to 411; these read GHRA…RSLK, GHTD…ECIK, GHDH…CVKT, GHRE…CKVE, DHEH…CLLT, GHDN…CMKT, and AHQH…WECR.

It belongs to the WD repeat LIS1/nudF family.

It is found in the cytoplasm. Its subcellular location is the cytoskeleton. The protein localises to the microtubule organizing center. The protein resides in the centrosome. In terms of biological role, positively regulates the activity of the minus-end directed microtubule motor protein dynein. May enhance dynein-mediated microtubule sliding by targeting dynein to the microtubule plus end. Required for several dynein- and microtubule-dependent processes. In Drosophila yakuba (Fruit fly), this protein is Lissencephaly-1 homolog.